Here is a 467-residue protein sequence, read N- to C-terminus: Gamma-aminobutyric acid receptor subunit gamma-3 (467 aa).

Residues 1 to 17 (MAPKLLLLLCLFSGLHA) form the signal peptide. Over 18–256 (RSRKVEEDEY…FELSRRMGYF (239 aa)) the chain is Extracellular. N-linked (GlcNAc...) asparagine glycosylation occurs at Asn-110. Residues Cys-171 and Cys-185 are joined by a disulfide bond. N-linked (GlcNAc...) asparagine glycosylation is present at Asn-228. Residues 257–277 (TIQTYIPCILTVVLSWVSFWI) traverse the membrane as a helical segment. The Cytoplasmic segment spans residues 278–283 (KKDATP). The chain crosses the membrane as a helical span at residues 284 to 303 (ARTALGITTVLTMTTLSTIA). Residues 304–311 (RKSLPRVS) are Extracellular-facing. Residues 312–332 (YVTAMDLFVTVCFLFVFAALM) traverse the membrane as a helical segment. Over 333 to 446 (EYATLNYYSS…DILELDSYSR (114 aa)) the chain is Cytoplasmic. Residues 447 to 467 (VFFPTSFLLFNLVYWVGYLYL) traverse the membrane as a helical segment.

Belongs to the ligand-gated ion channel (TC 1.A.9) family. Gamma-aminobutyric acid receptor (TC 1.A.9.5) subfamily. GABRG3 sub-subfamily. In terms of assembly, heteropentamer, formed by a combination of alpha (GABRA1-6), beta (GABRB1-3), gamma (GABRG1-3), delta (GABRD), epsilon (GABRE), rho (GABRR1-3), pi (GABRP) and theta (GABRQ) chains, each subunit exhibiting distinct physiological and pharmacological properties. May be palmitoylated. Expressed in brain.

The protein localises to the postsynaptic cell membrane. Its subcellular location is the cell membrane. The enzyme catalyses chloride(in) = chloride(out). In terms of biological role, gamma subunit of the heteropentameric ligand-gated chloride channel gated by gamma-aminobutyric acid (GABA), a major inhibitory neurotransmitter in the brain. GABA-gated chloride channels, also named GABA(A) receptors (GABAAR), consist of five subunits arranged around a central pore and contain GABA active binding site(s) located at the alpha and beta subunit interface(s). When activated by GABA, GABAARs selectively allow the flow of chloride across the cell membrane down their electrochemical gradient. The polypeptide is Gamma-aminobutyric acid receptor subunit gamma-3 (Homo sapiens (Human)).